We begin with the raw amino-acid sequence, 431 residues long: Glutamate--tRNA ligase 1 (431 aa).

The 'HIGH' region signature appears at 6-16 (PSPTGDMHIGN). Positions 235 to 239 (KMSKR) match the 'KMSKS' region motif. K238 contributes to the ATP binding site.

Belongs to the class-I aminoacyl-tRNA synthetase family. Glutamate--tRNA ligase type 1 subfamily. As to quaternary structure, monomer.

It is found in the cytoplasm. The catalysed reaction is tRNA(Glu) + L-glutamate + ATP = L-glutamyl-tRNA(Glu) + AMP + diphosphate. Its function is as follows. Catalyzes the attachment of glutamate to tRNA(Glu) in a two-step reaction: glutamate is first activated by ATP to form Glu-AMP and then transferred to the acceptor end of tRNA(Glu). In Campylobacter curvus (strain 525.92), this protein is Glutamate--tRNA ligase 1.